The following is a 213-amino-acid chain: Embryo-specific protein ATS3 (213 aa).

The N-terminal stretch at 1-21 (MTFPSLSVSFLFFAFIFVTHA) is a signal peptide. In terms of domain architecture, PLAT spans 34-148 (CPYTVVVMTS…LNTWYGHNNC (115 aa)). A disordered region spans residues 147–188 (NCNTTGRPSSPDLPPPHFPPEFPPETPTTPPPPPPRPSAASR). N-linked (GlcNAc...) asparagine glycosylation occurs at Asn149. Residues 157-183 (PDLPPPHFPPEFPPETPTTPPPPPPRP) are compositionally biased toward pro residues.

As to expression, expressed in seeds. Expression is restricted to the developing embryo.

Its subcellular location is the secreted. In terms of biological role, may play a role during embryo development. The sequence is that of Embryo-specific protein ATS3 from Arabidopsis thaliana (Mouse-ear cress).